The primary structure comprises 260 residues: Snake venom serine protease homolog (260 aa).

A signal peptide spans 1–18 (MVLIRVLANLLILQLSYA). Positions 19–24 (QKASEL) are excised as a propeptide. The region spanning 25 to 251 (IIGGDECNIN…YTEWIRSIIA (227 aa)) is the Peptidase S1 domain. Intrachain disulfides connect C31–C165, C52–C68, C100–C258, C144–C212, C176–C191, and C202–C227. Residue N83 is glycosylated (N-linked (GlcNAc...) asparagine).

Belongs to the peptidase S1 family. Snake venom subfamily. As to expression, expressed by the venom gland.

It localises to the secreted. Functionally, snake venom serine protease homolog that may act in the hemostasis system of the prey. The chain is Snake venom serine protease homolog from Bothrops jararacussu (Jararacussu).